Here is a 179-residue protein sequence, read N- to C-terminus: Auxin-induced protein IAA6 (179 aa).

Residues 13-17 (LRLGL) carry the EAR-like (transcriptional repression) motif. The disordered stretch occupies residues 31-52 (FSEIDGGVEENGGSGDRKSVDK). A PB1 domain is found at 75–163 (KMYMKVSMDG…KRLRIMKRSD (89 aa)).

It belongs to the Aux/IAA family. In terms of assembly, homodimers and heterodimers.

The protein localises to the nucleus. In terms of biological role, aux/IAA proteins are short-lived transcriptional factors that function as repressors of early auxin response genes at low auxin concentrations. Repression is thought to result from the interaction with auxin response factors (ARFs), proteins that bind to the auxin-responsive promoter element (AuxRE). Formation of heterodimers with ARF proteins may alter their ability to modulate early auxin response genes expression. The polypeptide is Auxin-induced protein IAA6 (IAA6) (Pisum sativum (Garden pea)).